We begin with the raw amino-acid sequence, 191 residues long: Small ribosomal subunit protein bS6 (191 aa).

The disordered stretch occupies residues 168–191; it reads KVNLTRKPTPNKSSENKQKVEKQA. The segment covering 181–191 has biased composition (basic and acidic residues); that stretch reads SENKQKVEKQA.

Belongs to the bacterial ribosomal protein bS6 family.

Binds together with bS18 to 16S ribosomal RNA. This Mycoplasmoides gallisepticum (strain R(low / passage 15 / clone 2)) (Mycoplasma gallisepticum) protein is Small ribosomal subunit protein bS6.